Here is a 111-residue protein sequence, read N- to C-terminus: Phosphoribosyl-ATP pyrophosphatase (111 aa).

The protein belongs to the PRA-PH family.

It is found in the cytoplasm. It catalyses the reaction 1-(5-phospho-beta-D-ribosyl)-ATP + H2O = 1-(5-phospho-beta-D-ribosyl)-5'-AMP + diphosphate + H(+). The protein operates within amino-acid biosynthesis; L-histidine biosynthesis; L-histidine from 5-phospho-alpha-D-ribose 1-diphosphate: step 2/9. This chain is Phosphoribosyl-ATP pyrophosphatase, found in Ectopseudomonas mendocina (strain ymp) (Pseudomonas mendocina).